Consider the following 201-residue polypeptide: LexA repressor (201 aa).

Positions 28 to 48 (LREIGGHLGINGTLGVMKHLD) form a DNA-binding region, H-T-H motif. Active-site for autocatalytic cleavage activity residues include Ser120 and Lys157.

It belongs to the peptidase S24 family. In terms of assembly, homodimer.

It carries out the reaction Hydrolysis of Ala-|-Gly bond in repressor LexA.. Functionally, represses a number of genes involved in the response to DNA damage (SOS response), including recA and lexA. In the presence of single-stranded DNA, RecA interacts with LexA causing an autocatalytic cleavage which disrupts the DNA-binding part of LexA, leading to derepression of the SOS regulon and eventually DNA repair. This is LexA repressor from Geotalea uraniireducens (strain Rf4) (Geobacter uraniireducens).